The following is a 199-amino-acid chain: N-(5'-phosphoribosyl)anthranilate isomerase (199 aa).

This sequence belongs to the TrpF family.

The enzyme catalyses N-(5-phospho-beta-D-ribosyl)anthranilate = 1-(2-carboxyphenylamino)-1-deoxy-D-ribulose 5-phosphate. It participates in amino-acid biosynthesis; L-tryptophan biosynthesis; L-tryptophan from chorismate: step 3/5. This is N-(5'-phosphoribosyl)anthranilate isomerase from Lacticaseibacillus paracasei (strain ATCC 334 / BCRC 17002 / CCUG 31169 / CIP 107868 / KCTC 3260 / NRRL B-441) (Lactobacillus paracasei).